Here is a 414-residue protein sequence, read N- to C-terminus: Mu-like prophage FluMu F protein (414 aa).

The protein to phage Mu protein F.

In terms of biological role, involved in virion morphogenesis. This is Mu-like prophage FluMu F protein from Haemophilus influenzae (strain ATCC 51907 / DSM 11121 / KW20 / Rd).